The primary structure comprises 561 residues: Membrane protein insertase YidC (561 aa).

The next 6 membrane-spanning stretches (helical) occupy residues 7–27 (ILIV…NQDY), 342–362 (LELT…FWLL), 368–388 (LLGN…GLFF), 438–458 (LGGC…YWVL), 469–489 (WMLW…PIIM), and 516–536 (PIIF…YWVV).

Belongs to the OXA1/ALB3/YidC family. Type 1 subfamily. Interacts with the Sec translocase complex via SecD. Specifically interacts with transmembrane segments of nascent integral membrane proteins during membrane integration.

It is found in the cell inner membrane. Its function is as follows. Required for the insertion and/or proper folding and/or complex formation of integral membrane proteins into the membrane. Involved in integration of membrane proteins that insert both dependently and independently of the Sec translocase complex, as well as at least some lipoproteins. Aids folding of multispanning membrane proteins. This is Membrane protein insertase YidC from Pseudomonas entomophila (strain L48).